The chain runs to 338 residues: Heat-inducible transcription repressor HrcA (338 aa).

This sequence belongs to the HrcA family.

Negative regulator of class I heat shock genes (grpE-dnaK-dnaJ and groELS operons). Prevents heat-shock induction of these operons. The sequence is that of Heat-inducible transcription repressor HrcA from Thermotoga petrophila (strain ATCC BAA-488 / DSM 13995 / JCM 10881 / RKU-1).